The sequence spans 456 residues: Trigger factor (456 aa).

Residues 192–277 (GDTVVIDFVG…IHEVKTKEVP (86 aa)) form the PPIase FKBP-type domain.

The protein belongs to the FKBP-type PPIase family. Tig subfamily.

It localises to the cytoplasm. It catalyses the reaction [protein]-peptidylproline (omega=180) = [protein]-peptidylproline (omega=0). Involved in protein export. Acts as a chaperone by maintaining the newly synthesized protein in an open conformation. Functions as a peptidyl-prolyl cis-trans isomerase. The polypeptide is Trigger factor (Streptococcus pyogenes serotype M12 (strain MGAS9429)).